Reading from the N-terminus, the 155-residue chain is Putative pre-16S rRNA nuclease (155 aa).

Belongs to the YqgF nuclease family.

Its subcellular location is the cytoplasm. Functionally, could be a nuclease involved in processing of the 5'-end of pre-16S rRNA. This is Putative pre-16S rRNA nuclease from Xylella fastidiosa (strain M12).